Here is a 79-residue protein sequence, read N- to C-terminus: Putative antitoxin MM_2475 (79 aa).

This sequence belongs to the UPF0330 family.

Its function is as follows. Possibly the antitoxin component of a type II toxin-antitoxin (TA) system. This chain is Putative antitoxin MM_2475, found in Methanosarcina mazei (strain ATCC BAA-159 / DSM 3647 / Goe1 / Go1 / JCM 11833 / OCM 88) (Methanosarcina frisia).